Reading from the N-terminus, the 544-residue chain is Membrane protein insertase YidC (544 aa).

A run of 5 helical transmembrane segments spans residues 13 to 33 (LSLF…SNIL), 343 to 363 (WGLS…PLTF), 409 to 429 (LGGC…YSLV), 461 to 481 (LYFV…FTQL), and 506 to 526 (MPIM…IYWI).

The protein belongs to the OXA1/ALB3/YidC family. Type 1 subfamily. In terms of assembly, interacts with the Sec translocase complex via SecD. Specifically interacts with transmembrane segments of nascent integral membrane proteins during membrane integration.

It is found in the cell inner membrane. Required for the insertion and/or proper folding and/or complex formation of integral membrane proteins into the membrane. Involved in integration of membrane proteins that insert both dependently and independently of the Sec translocase complex, as well as at least some lipoproteins. Aids folding of multispanning membrane proteins. The polypeptide is Membrane protein insertase YidC (Borreliella burgdorferi (strain ATCC 35210 / DSM 4680 / CIP 102532 / B31) (Borrelia burgdorferi)).